Here is a 369-residue protein sequence, read N- to C-terminus: Ribosomal RNA large subunit methyltransferase M (369 aa).

Residues Ser-198, 231-234 (APGG), Asp-250, Asp-270, and Asp-287 each bind S-adenosyl-L-methionine. The Proton acceptor role is filled by Lys-316.

It belongs to the class I-like SAM-binding methyltransferase superfamily. RNA methyltransferase RlmE family. RlmM subfamily. As to quaternary structure, monomer.

Its subcellular location is the cytoplasm. It catalyses the reaction cytidine(2498) in 23S rRNA + S-adenosyl-L-methionine = 2'-O-methylcytidine(2498) in 23S rRNA + S-adenosyl-L-homocysteine + H(+). Functionally, catalyzes the 2'-O-methylation at nucleotide C2498 in 23S rRNA. In Idiomarina loihiensis (strain ATCC BAA-735 / DSM 15497 / L2-TR), this protein is Ribosomal RNA large subunit methyltransferase M.